Consider the following 290-residue polypeptide: Poly-beta-1,6-N-acetyl-D-glucosamine N-deacetylase (290 aa).

The signal sequence occupies residues 1–28 (MKYRKLIILVLSILIILPVSTLDGHHIA). Positions 114 to 290 (RSVWINFDDM…KRWDGFHEKD (177 aa)) constitute a NodB homology domain.

Belongs to the polysaccharide deacetylase family.

Its subcellular location is the secreted. It localises to the cell wall. Its function is as follows. Catalyzes the N-deacetylation of poly-beta-1,6-N-acetyl-D-glucosamine (PNAG, also referred to as PIA), a biofilm adhesin polysaccharide. N-deacetylation is crucial for attachment of the polysaccharide to the bacterial cell surface; it leads to the introduction of positive charges in the otherwise neutral PIA polymer, allowing electrostatic interactions. The chain is Poly-beta-1,6-N-acetyl-D-glucosamine N-deacetylase (icaB) from Staphylococcus aureus (strain Mu50 / ATCC 700699).